A 257-amino-acid polypeptide reads, in one-letter code: BTB/POZ domain-containing protein kctd15-like (257 aa).

Phosphoserine is present on residues Ser9 and Ser12. A BTB domain is found at 30–100; the sequence is APVHIDVGGH…LRTSKLLLPE (71 aa).

The polypeptide is BTB/POZ domain-containing protein kctd15-like (kctd15l) (Danio rerio (Zebrafish)).